The chain runs to 490 residues: Cytochrome P450 2C26 (490 aa).

Heme is bound at residue Cys-435.

It belongs to the cytochrome P450 family. It depends on heme as a cofactor.

Its subcellular location is the endoplasmic reticulum membrane. The protein resides in the microsome membrane. It carries out the reaction an organic molecule + reduced [NADPH--hemoprotein reductase] + O2 = an alcohol + oxidized [NADPH--hemoprotein reductase] + H2O + H(+). Functionally, catalyzes the hydroxylation of tolbutamide and the N-demethylation of aminopyrine and benzphetamine. The polypeptide is Cytochrome P450 2C26 (CYP2C26) (Mesocricetus auratus (Golden hamster)).